The following is a 319-amino-acid chain: Transcription factor STKL2 (319 aa).

The interval 1 to 119 (MAPLESPATA…NKKANPQRVW (119 aa)) is disordered. The span at 21-34 (EIFKSSSEESKPKD) shows a compositional bias: basic and acidic residues. Polar residues predominate over residues 38-55 (VPSSKTLKSPSAAVNSKT). Over residues 89 to 112 (RAGEGSTSRDMHVKRVKKEDDNKK) the composition is skewed to basic and acidic residues.

This sequence belongs to the GeBP family. Expressed strongly in leaves and flowers, weakly in roots, and very weakly in stems.

The protein localises to the nucleus. Functionally, transcription repressor that binds DNA in a sequence-specific manner, 5'-GCCT-3', to regulate the expression of PGR. Acts as a modulatory component for the glucose-triggered developmental leaf growth process. The sequence is that of Transcription factor STKL2 from Arabidopsis thaliana (Mouse-ear cress).